Consider the following 84-residue polypeptide: Large ribosomal subunit protein bL31B (84 aa).

It belongs to the bacterial ribosomal protein bL31 family. Type B subfamily. As to quaternary structure, part of the 50S ribosomal subunit.

This chain is Large ribosomal subunit protein bL31B, found in Alkalilimnicola ehrlichii (strain ATCC BAA-1101 / DSM 17681 / MLHE-1).